Consider the following 1190-residue polypeptide: Ras-specific guanine nucleotide-releasing factor 2 (1190 aa).

The PH 1 domain occupies 22 to 133; the sequence is EGTKRGFLSK…WMEAIHQASY (112 aa). Residues 155-193 are a coiled coil; the sequence is ETEKIAANQLRHQLEDQDTEIERLKSEIVALNKTKERMR. An IQ domain is found at 205–234; that stretch reads DIKKIKKVQSFMRGWLCRRKWKTIVQDYIC. The 187-residue stretch at 243–429 folds into the DH domain; that stretch reads KRNQIVFTMV…EELSRVMHDE (187 aa). A PH 2 domain is found at 470–588; the sequence is PSVERGKLSK…WMSDISQCVD (119 aa). An N-terminal Ras-GEF domain is found at 635–755; it reads KVPQIRYASV…LTSSLNSRIG (121 aa). The disordered stretch occupies residues 713–744; the sequence is VDGKSPRLCRKFSSPPPLAVSRTSSPVRARKL. 2 positions are modified to phosphoserine: serine 725 and serine 726. Position 736 is a phosphoserine; by CDK5 (serine 736). The segment at 743–751 is regulates proteasomal degradation; it reads KLSLTSSLN. Phosphoserine occurs at positions 745 and 749. The tract at residues 757-826 is disordered; sequence LDLTTSSSSS…QPGGQVADST (70 aa). Low complexity predominate over residues 760–776; that stretch reads TTSSSSSSPTTTVHSPA. Over residues 798–810 the composition is skewed to polar residues; it reads TDMSPCRSPSTTP. Serine 801, serine 805, and serine 925 each carry phosphoserine. Residues 955-1187 enclose the Ras-GEF domain; sequence SAMELAEQIT…YELSLKIEPR (233 aa). The interval 1052 to 1081 is responsible of the affinity for farnesylated versus geranylgeranylated Ras; sequence ALNRSAIYRLKKTWTKVSKQTKALMDKLQK.

In terms of assembly, homooligomer and heterooligomer with RASGRF1. Interacts with Ras and RAC1. Interacts in a calcium-dependent manner with calmodulin. Interacts with CDK5R1 and probably EPB49. Interacts with the AMPA receptor through GRIA1. Interacts with microtubules. In terms of processing, phosphorylated by CDK5; down-regulates RASGRF2-mediated RAC1 activation. Ubiquitinated upon interaction with Ras. Ubiquitination leads to degradation through the 26S proteasome. In terms of tissue distribution, widely expressed. Detected in brain, lung, spleen, pancreas, kidney, liver, heart, mammary gland and skeletal muscle.

The protein localises to the cytoplasm. It is found in the cell membrane. Its subcellular location is the endoplasmic reticulum membrane. Its function is as follows. Functions as a calcium-regulated nucleotide exchange factor activating both Ras and RAC1 through the exchange of bound GDP for GTP. Preferentially activates HRAS in vivo compared to RRAS based on their different types of prenylation. Functions in synaptic plasticity by contributing to the induction of long term potentiation. The chain is Ras-specific guanine nucleotide-releasing factor 2 (Rasgrf2) from Rattus norvegicus (Rat).